Reading from the N-terminus, the 723-residue chain is ADP-ribosylation factor-binding protein GGA3 (723 aa).

Positions 1 to 313 (MAEAEGESLE…GEVATLTLPD (313 aa)) are binds to ARF1 (in long isoform). A VHS domain is found at 16–146 (ATNPSNRQED…MLKRQGIVQS (131 aa)). Ser159 and Ser275 each carry phosphoserine. The GAT domain maps to 171–298 (DEEKSKLLAK…VINSYKTIIE (128 aa)). The segment at 299–593 (GQVINGEVAT…IHVPLESIKP (295 aa)) is unstructured hinge. Positions 339-384 (SSVLAPAPTPPSSGIPILPPPPQASGPPRSRSSSQAEATLGPSSTS) are disordered. A compositionally biased stretch (pro residues) spans 345 to 363 (APTPPSSGIPILPPPPQAS). Over residues 364–374 (GPPRSRSSSQA) the composition is skewed to low complexity. The short motif at 391 to 395 (DEELL) is the DXXLL element. The disordered stretch occupies residues 428–464 (DFFSPRPGTAACGASDAPLLQPSAPSSSSSQAPLPPP). Positions 441 to 459 (ASDAPLLQPSAPSSSSSQA) are enriched in low complexity. The GAE domain occupies 594 to 715 (SSALPVTAYD…TEVGEVDQFP (122 aa)).

It belongs to the GGA protein family. In terms of assembly, monomer. Interacts with GGA1 and GGA2. Binds to clathrin and activated ARFs, such as ARF1, ARF5 and ARF6. Binds RABEP1 and RABGEF1. Interacts with the membrane proteins M6PR/CD-MPR and IGF2R/CI-MPR and the accessory proteins SYNRG, EPN4, NECAP1, NECAP2 and AFTPH/aftiphilin. Interacts with TSG101 and UBC. Interacts with ADRA2B. Interacts with NTRK1; the interaction is independent of NTRK1 activation and ubiquitination. Interacts (via VHS domain) with BACE1 (via DXXLL motif). In terms of processing, phosphorylated by CK2 and dephosphorylated by PP2A. Phosphorylation of GGA3 allows the internal DXXLL motif to bind the VHS domain and to inhibit the recognition of cargo signals. Post-translationally, ubiquitinated. Proteolytically cleaved during apoptosis by CASP3. As to expression, ubiquitously expressed.

It is found in the golgi apparatus. The protein resides in the trans-Golgi network membrane. It localises to the endosome membrane. The protein localises to the early endosome membrane. Its subcellular location is the recycling endosome membrane. In terms of biological role, plays a role in protein sorting and trafficking between the trans-Golgi network (TGN) and endosomes. Mediates the ARF-dependent recruitment of clathrin to the TGN and binds ubiquitinated proteins and membrane cargo molecules with a cytosolic acidic cluster-dileucine (DXXLL) motif. Mediates export of the GPCR receptor ADRA2B to the cell surface. nvolved in BACE1 transport and sorting as well as regulation of BACE1 protein levels. Regulates retrograde transport of BACE1 from endosomes to the trans-Golgi network via interaction through the VHS motif and dependent of BACE1 phosphorylation. Modulates BACE1 protein levels independently of the interaction between VHS domain and DXXLL motif through recognition of ubiquitination. Key player in a novel DXXLL-mediated endosomal sorting machinery to the recycling pathway that targets NTRK1 to the plasma membrane. The protein is ADP-ribosylation factor-binding protein GGA3 of Homo sapiens (Human).